Reading from the N-terminus, the 432-residue chain is MDALEKGAATSGPAPRGRPSRGRPPKLQRSRGAGRGLEKPPHLAALVLARGGSKGIPLKNIKRLAGVPLIGWVLRAALDAGVFQSVWVSTDHDEIENVAKQFGAQVHRRSSETSKDSSTSLDAIVEFLNYHNEVDIVGNIQATSPCLHPTDLQKVAEMIREEGYDSVFSVVRRHQFRWSEIQKGVREVTEPLNLNPAKRPRRQDWDGELYENGSFYFAKRHLIEMGYLQGGKMAYYEMRAEHSVDIDVDIDWPIAEQRVLRFGYFGKEKLKEIKLLVCNIDGCLTNGHIYVSGDQKEIISYDVKDAIGISLLKKSGIEVRLISERACSKQTLSALKLDCKTEVSVSDKLATVDEWRKEMGLCWKEVAYLGNEVSDEECLKRVGLSAVPADACSRAQKAVGYICKCSGGRGAIREFAEHIFLLLEKVNNSCQK.

Met-1 bears the N-acetylmethionine mark. The tract at residues Met-1 to Glu-38 is disordered. The BC1 motif signature appears at Pro-15 to Arg-31. The segment covering Arg-18 to Arg-29 has biased composition (basic residues). 2 positions are modified to omega-N-methylarginine: Arg-35 and Arg-50. Positions 50, 60, 109, 118, 120, and 141 each coordinate substrate. Positions Lys-198–Asp-204 match the BC2 motif motif. The active site involves Arg-199. The BC3 motif motif lies at Lys-267 to Lys-274.

This sequence belongs to the CMP-NeuNAc synthase family. Homotetramer; the active enzyme is formed by a dimer of dimers. In terms of tissue distribution, liver.

Its subcellular location is the nucleus. The enzyme catalyses an N-acylneuraminate + CTP = a CMP-N-acyl-beta-neuraminate + diphosphate. It functions in the pathway amino-sugar metabolism; N-acetylneuraminate metabolism. In terms of biological role, catalyzes the activation of N-acetylneuraminic acid (NeuNAc) to cytidine 5'-monophosphate N-acetylneuraminic acid (CMP-NeuNAc), a substrate required for the addition of sialic acid. Has some activity toward NeuNAc, N-glycolylneuraminic acid (Neu5Gc) or 2-keto-3-deoxy-D-glycero-D-galacto-nononic acid (KDN). The polypeptide is N-acylneuraminate cytidylyltransferase (Cmas) (Rattus norvegicus (Rat)).